The following is a 191-amino-acid chain: CASP-like protein 2U3 (191 aa).

The Cytoplasmic portion of the chain corresponds to 1-25 (MGAYDGAEAPRAAPASTAANSRPSR). A helical membrane pass occupies residues 26 to 46 (LLLLHSLLLRLVAVVVSILVI). At 47 to 68 (AVMVHAKQRVMIFKAEWDNSKA) the chain is on the extracellular side. Residues 69–89 (FVALVAISAICLGYSFLQFIL) form a helical membrane-spanning segment. Over 90-114 (SAFHLCSKSWKSPTKCWAWMNFIAD) the chain is Cytoplasmic. A helical membrane pass occupies residues 115–135 (QILTYAMLGAAAAAAELAYIA). Over 136–157 (KNGSSRAQWQPICSTFNTFCTR) the chain is Extracellular. The N-linked (GlcNAc...) asparagine glycan is linked to Asn-137. Residues 158–178 (AGASIILSFIAVLALANSSAI) traverse the membrane as a helical segment. Residues 179–191 (SAYHLFRRPSSSV) are Cytoplasmic-facing.

This sequence belongs to the Casparian strip membrane proteins (CASP) family. Homodimer and heterodimers.

It localises to the cell membrane. The polypeptide is CASP-like protein 2U3 (Selaginella moellendorffii (Spikemoss)).